We begin with the raw amino-acid sequence, 628 residues long: Rac GTPase-activating protein 1 (628 aa).

At Met1 the chain carries N-acetylmethionine. The stretch at 33 to 110 (QVVKDFEDFR…IQLIRDILMC (78 aa)) forms a coiled coil. Residues 107–286 (ILMCDTSGSI…GTPQNTGGMR (180 aa)) form an interaction with SLC26A8 region. The residue at position 150 (Ser150) is a Phosphoserine; by PLK1. Ser155 is subject to Phosphoserine. Position 158 is a phosphoserine; by PLK1 (Ser158). At Thr162 the chain carries Phosphothreonine. Ser165 and Ser171 each carry phosphoserine; by PLK1. Positions 179 to 201 (KKREKRRSNSRQFIDGPPGPVKK) are disordered. Phosphoserine occurs at positions 204, 207, and 215. A disordered region spans residues 242–284 (SWTRSRGKSGPLQPVNSDSALNSRPLEPRTDTDNLGTPQNTGG). Lys249 is covalently cross-linked (Glycyl lysine isopeptide (Lys-Gly) (interchain with G-Cter in SUMO2)). At Ser258 the chain carries Phosphoserine. Residues 274 to 283 (DNLGTPQNTG) show a composition bias toward polar residues. The Phorbol-ester/DAG-type zinc finger occupies 287-336 (LHDFVSKTVIKPESCVPCGKRIKFGKLSLKCRDCRLVSHPECRDRCPLPC). Position 343 is a phosphothreonine (Thr343). One can recognise a Rho-GAP domain in the interval 350–540 (GMLADFVSQA…RLLSLPLEYW (191 aa)). A Phosphoserine; by AURKB modification is found at Ser388. Lys405 participates in a covalent cross-link: Glycyl lysine isopeptide (Lys-Gly) (interchain with G-Cter in SUMO2). The residue at position 411 (Ser411) is a Phosphoserine; by AURKB. Phosphothreonine occurs at positions 564, 577, 585, and 602.

In terms of assembly, heterotetramer of two molecules each of RACGAP1 and KIF23. Found in the centralspindlin complex. Associates with alpha-, beta- and gamma-tubulin and microtubules. Interacts via its Rho-GAP domain with RND2. Associates with AURKB during M phase. Interacts via its Rho-GAP domain and basic region with PRC1. The interaction with PRC1 inhibits its GAP activity towards CDC42 in vitro, which may be required for maintaining normal spindle morphology. Interacts with SLC26A8 via its N-terminus. Interacts with ECT2; the interaction is direct, occurs at anaphase and during cytokinesis in a microtubule-dependent manner, is enhanced by phosphorylation by PLK1 and phosphorylation at Ser-165 plays a major role in mediating binding. Interacts with RAB11FIP3; the interaction occurs at late telophase. Interacts with KIF23; the interaction is direct. Phosphorylated at multiple sites in the midbody during cytokinesis. Phosphorylation by AURKB on Ser-388 at the midbody is, at least in part, responsible for exerting its latent GAP activity towards RhoA. Phosphorylation on multiple serine residues by PLK1 enhances its association with ECT2 and is critical for cleavage furrow formation. Phosphorylation on Ser-165 plays a major role in mediating interaction with ECT2. Phosphorylation on Ser-158 does not appear to contribute to binding to ECT2. As to expression, highly expressed in testis, thymus and spleen and weakly expressed in brain, heart, skeletal muscle and kidney. In testis, expression is restricted to germ cells with the highest levels of expression found in spermatocytes. Not detected in adult liver. Also expressed in fetal liver and in several hematopoietic cell lines.

It localises to the nucleus. It is found in the cytoplasm. The protein localises to the cytoskeleton. The protein resides in the spindle. Its subcellular location is the cytoplasmic vesicle. It localises to the secretory vesicle. It is found in the acrosome. The protein localises to the cleavage furrow. The protein resides in the midbody. Its subcellular location is the midbody ring. It localises to the cell membrane. In terms of biological role, component of the centralspindlin complex that serves as a microtubule-dependent and Rho-mediated signaling required for the myosin contractile ring formation during the cell cycle cytokinesis. Required for proper attachment of the midbody to the cell membrane during cytokinesis. Sequentially binds to ECT2 and RAB11FIP3 which regulates cleavage furrow ingression and abscission during cytokinesis. Plays key roles in controlling cell growth and differentiation of hematopoietic cells through mechanisms other than regulating Rac GTPase activity. Has a critical role in erythropoiesis. Also involved in the regulation of growth-related processes in adipocytes and myoblasts. May be involved in regulating spermatogenesis and in the RACGAP1 pathway in neuronal proliferation. Shows strong GAP (GTPase activation) activity towards CDC42 and RAC1 and less towards RHOA. Essential for the early stages of embryogenesis. May play a role in regulating cortical activity through RHOA during cytokinesis. May participate in the regulation of sulfate transport in male germ cells. The protein is Rac GTPase-activating protein 1 of Mus musculus (Mouse).